Reading from the N-terminus, the 361-residue chain is Phosphoserine aminotransferase (361 aa).

Arg42 provides a ligand contact to L-glutamate. Pyridoxal 5'-phosphate contacts are provided by residues 76–77 (GR), Trp102, Thr154, Asp173, and Gln196. Lys197 carries the N6-(pyridoxal phosphate)lysine modification. Residue 238–239 (NT) participates in pyridoxal 5'-phosphate binding.

This sequence belongs to the class-V pyridoxal-phosphate-dependent aminotransferase family. SerC subfamily. Homodimer. It depends on pyridoxal 5'-phosphate as a cofactor.

The protein resides in the cytoplasm. The catalysed reaction is O-phospho-L-serine + 2-oxoglutarate = 3-phosphooxypyruvate + L-glutamate. The enzyme catalyses 4-(phosphooxy)-L-threonine + 2-oxoglutarate = (R)-3-hydroxy-2-oxo-4-phosphooxybutanoate + L-glutamate. The protein operates within amino-acid biosynthesis; L-serine biosynthesis; L-serine from 3-phospho-D-glycerate: step 2/3. It functions in the pathway cofactor biosynthesis; pyridoxine 5'-phosphate biosynthesis; pyridoxine 5'-phosphate from D-erythrose 4-phosphate: step 3/5. Catalyzes the reversible conversion of 3-phosphohydroxypyruvate to phosphoserine and of 3-hydroxy-2-oxo-4-phosphonooxybutanoate to phosphohydroxythreonine. This chain is Phosphoserine aminotransferase, found in Idiomarina loihiensis (strain ATCC BAA-735 / DSM 15497 / L2-TR).